The primary structure comprises 91 residues: CLAVATA3/ESR (CLE)-related protein 27 (91 aa).

The N-terminal stretch at 1–35 (MTHAREWRSSLTTTLLMVILLSYMLHLFCVYSRVG) is a signal peptide. Residues Pro83 and Pro86 each carry the hydroxyproline modification. Pro86 is a glycosylation site (O-linked (Ara...) hydroxyproline).

Belongs to the CLV3/ESR signal peptide family. In terms of processing, the O-glycosylation (arabinosylation) of the hydroxyproline Pro-86 enhances binding affinity of the CLE27p peptide for its receptor. In terms of tissue distribution, mostly expressed in apex, and, to a lower extent, in roots, leaves, flowers and siliques.

Its subcellular location is the secreted. The protein localises to the extracellular space. Its function is as follows. Extracellular signal peptide that regulates cell fate. Represses root apical meristem maintenance. The sequence is that of CLAVATA3/ESR (CLE)-related protein 27 from Arabidopsis thaliana (Mouse-ear cress).